The following is an 803-amino-acid chain: Urocanate reductase (803 aa).

An FMN phosphoryl serine modification is found at Ser-258. Residues Ala-311, Glu-330, Asn-338, Thr-339, Gly-343, Gly-344, and Asp-573 each coordinate FAD. Arg-632 (proton donor) is an active-site residue. Positions 739, 768, 783, and 784 each coordinate FAD.

This sequence belongs to the FAD-dependent oxidoreductase 2 family. FRD/SDH subfamily. Requires FAD as cofactor. FMN is required as a cofactor.

The catalysed reaction is dihydrourocanate + A = urocanate + AH2. Its function is as follows. Catalyzes the two-electron reduction of urocanate to dihydrourocanate (also named imidazole propionate or deamino-histidine). Dihydrourocanate is present at higher concentrations in subjects with type 2 diabetes, and directly impairs glucose tolerance and insulin signaling at the level of insulin receptor substrate (IRS) through activation of p38 gamma (MAPK12)-p62-mTORC1. Therefore, the UrdA enzyme from the gut bacteria S.mutans strain UA159 may contribute to the pathogenesis of type 2 diabetes by producing the microbial metabolite dihydrourocanate. This chain is Urocanate reductase, found in Streptococcus mutans serotype c (strain ATCC 700610 / UA159).